A 534-amino-acid polypeptide reads, in one-letter code: Glucose-6-phosphate isomerase (534 aa).

Residue E356 is the Proton donor of the active site. Residues H387 and K502 contribute to the active site.

It belongs to the GPI family.

Its subcellular location is the cytoplasm. It catalyses the reaction alpha-D-glucose 6-phosphate = beta-D-fructose 6-phosphate. It functions in the pathway carbohydrate biosynthesis; gluconeogenesis. It participates in carbohydrate degradation; glycolysis; D-glyceraldehyde 3-phosphate and glycerone phosphate from D-glucose: step 2/4. Functionally, catalyzes the reversible isomerization of glucose-6-phosphate to fructose-6-phosphate. This chain is Glucose-6-phosphate isomerase, found in Desulfotalea psychrophila (strain LSv54 / DSM 12343).